Here is a 98-residue protein sequence, read N- to C-terminus: Large ribosomal subunit protein uL23 (98 aa).

The protein belongs to the universal ribosomal protein uL23 family. Part of the 50S ribosomal subunit. Contacts protein L29, and trigger factor when it is bound to the ribosome.

Functionally, one of the early assembly proteins it binds 23S rRNA. One of the proteins that surrounds the polypeptide exit tunnel on the outside of the ribosome. Forms the main docking site for trigger factor binding to the ribosome. In Bordetella avium (strain 197N), this protein is Large ribosomal subunit protein uL23.